We begin with the raw amino-acid sequence, 283 residues long: Vitamin K epoxide reductase homolog (283 aa).

Residues 1-20 (MASYLKLKAQEETWLQRHSR) are Cytoplasmic-facing. A helical membrane pass occupies residues 21-41 (LILAILAGLGSLLTAYLTYTK). Over 42 to 66 (LTEQPAAFCTGDGGCDLVLSSRWAE) the chain is Periplasmic. The cysteines at positions 50 and 56 are disulfide-linked. 59-65 (VLSSRWA) is an a quinone binding site. A helical transmembrane segment spans residues 67 to 87 (FLGIPTAAVGLLGFLGVLALA). At 88 to 102 (VLPDGLPLVKRWRWP) the chain is on the cytoplasmic side. The helical transmembrane segment at 103–123 (ALFGLVSAMTAFEMYMLYLMV) threads the bilayer. An a quinone-binding site is contributed by 111–122 (MTAFEMYMLYLM). Over 124–128 (AVLRQ) the chain is Periplasmic. Residues 129 to 149 (FCMYCTTAIILVAGLGLVTVL) traverse the membrane as a helical segment. An intrachain disulfide couples Cys-130 to Cys-133. Topologically, residues 150–158 (GHRWLDGGK) are cytoplasmic. A helical transmembrane segment spans residues 159 to 179 (LAFSYILVAFLTLVTTIGVYA). The Periplasmic segment spans residues 180–283 (NQVPPPSPLA…ASGYPLEEGR (104 aa)). The interval 186 to 283 (SPLAVGLAAH…ASGYPLEEGR (98 aa)) is thioredoxin-like domain. 2 cysteine pairs are disulfide-bonded: Cys-209/Cys-212 and Cys-231/Cys-244.

The protein belongs to the VKOR family.

It localises to the membrane. With respect to regulation, inhibited by ferulenol. Its function is as follows. Thiol-disulfide oxidoreductase that catalyzes vitamin K-dependent disulfide bond formation in periplasmic target proteins. The sequence is that of Vitamin K epoxide reductase homolog from Synechococcus sp. (strain JA-2-3B'a(2-13)) (Cyanobacteria bacterium Yellowstone B-Prime).